Here is a 914-residue protein sequence, read N- to C-terminus: High affinity cAMP-specific and IBMX-insensitive 3',5'-cyclic phosphodiesterase 8 (914 aa).

Disordered regions lie at residues 1–27 and 113–138; these read MGCS…PLDA and RRAT…HRKS. Over residues 116-129 the composition is skewed to low complexity; that stretch reads TGSTGTSGTSSSGG. The PAS domain occupies 312–359; sequence TQQALYTALHRLKEVVLITDDLLRIQYANRATERLLNMRLDEIISKQL. A PDEase domain is found at 558 to 893; sequence TAAIVPAKMK…SQWKKYDEQG (336 aa). The Proton donor role is filled by His-640. Positions 644, 682, 683, and 799 each coordinate a divalent metal cation.

Belongs to the cyclic nucleotide phosphodiesterase family. PDE8 subfamily. A divalent metal cation serves as cofactor. As to expression, expressed in Malpighian tubules and head.

It carries out the reaction 3',5'-cyclic AMP + H2O = AMP + H(+). The protein operates within purine metabolism; 3',5'-cyclic AMP degradation; AMP from 3',5'-cyclic AMP: step 1/1. In terms of biological role, hydrolyzes the second messenger cAMP, which is a key regulator of many important physiological processes. Involved in the positive regulation of MAP kinase signaling and in inhibiting oxidative stress-induced cell death. This Drosophila melanogaster (Fruit fly) protein is High affinity cAMP-specific and IBMX-insensitive 3',5'-cyclic phosphodiesterase 8.